Consider the following 106-residue polypeptide: RNA-binding protein Hfq (106 aa).

One can recognise a Sm domain in the interval Asp9 to Ile68. The tract at residues Glu78–Asp106 is disordered.

It belongs to the Hfq family. In terms of assembly, homohexamer.

Functionally, RNA chaperone that binds small regulatory RNA (sRNAs) and mRNAs to facilitate mRNA translational regulation in response to envelope stress, environmental stress and changes in metabolite concentrations. Also binds with high specificity to tRNAs. In Dichelobacter nodosus (strain VCS1703A), this protein is RNA-binding protein Hfq.